Consider the following 74-residue polypeptide: Guanine nucleotide-binding protein G(T) subunit gamma-T1 (74 aa).

The residue at position 71 (C71) is a Cysteine methyl ester. C71 carries the S-farnesyl cysteine lipid modification. Positions 72–74 (VIS) are cleaved as a propeptide — removed in mature form.

It belongs to the G protein gamma family. As to quaternary structure, g proteins are composed of 3 units, alpha, beta and gamma. As to expression, retinal rod outer segment.

It is found in the cell membrane. Guanine nucleotide-binding proteins (G proteins) are involved as a modulator or transducer in various transmembrane signaling systems. The beta and gamma chains are required for the GTPase activity, for replacement of GDP by GTP, and for G protein-effector interaction. This is Guanine nucleotide-binding protein G(T) subunit gamma-T1 (GNGT1) from Canis lupus familiaris (Dog).